Here is a 198-residue protein sequence, read N- to C-terminus: Inner membrane-spanning protein YciB (198 aa).

The next 5 helical transmembrane spans lie at 36 to 56 (IYSA…AIFI), 67 to 87 (LTLV…SETF), 90 to 110 (WKAP…HFIG), 135 to 155 (VAWI…AFTF), and 162 to 182 (FKVF…GIYL).

The protein belongs to the YciB family.

Its subcellular location is the cell inner membrane. Plays a role in cell envelope biogenesis, maintenance of cell envelope integrity and membrane homeostasis. The chain is Inner membrane-spanning protein YciB from Pseudomonas fluorescens (strain SBW25).